The primary structure comprises 266 residues: MIALALPAQDSGEFTPPGINEMHLPAILPWGAAEGFSKQMLLVLLSVVFIAVFFVLAARKQQLVPGKLQFAGEAAYGFVRNGIAKDIIGGRDFIKYVPLLFSLFFFILVNNIYGAIPLIQLPTFSHVGGAYVLAGIVYFTWIAIGIKKNGLRYFKLATVPSGVPWFILPIVIPIEIISNFVVRPVTHSLRLFATMLAGHLIVMIAGSGIEYLVMQESILLKGTSVLVLAGAIAMYMLEALIMVLQAYVFTLLTAIYIEGALHADSH.

The next 6 membrane-spanning stretches (helical) occupy residues 38–58 (KQML…VLAA), 99–119 (LLFS…IPLI), 126–146 (HVGG…AIGI), 162–182 (GVPW…NFVV), 191–211 (LFAT…GIEY), and 224–244 (SVLV…IMVL).

This sequence belongs to the ATPase A chain family. In terms of assembly, F-type ATPases have 2 components, CF(1) - the catalytic core - and CF(0) - the membrane proton channel. CF(1) has five subunits: alpha(3), beta(3), gamma(1), delta(1), epsilon(1). CF(0) has three main subunits: a(1), b(2) and c(9-12). The alpha and beta chains form an alternating ring which encloses part of the gamma chain. CF(1) is attached to CF(0) by a central stalk formed by the gamma and epsilon chains, while a peripheral stalk is formed by the delta and b chains.

The protein resides in the cell membrane. In terms of biological role, key component of the proton channel; it plays a direct role in the translocation of protons across the membrane. This chain is ATP synthase subunit a, found in Pseudarthrobacter chlorophenolicus (strain ATCC 700700 / DSM 12829 / CIP 107037 / JCM 12360 / KCTC 9906 / NCIMB 13794 / A6) (Arthrobacter chlorophenolicus).